Here is a 56-residue protein sequence, read N- to C-terminus: U4-myrmicitoxin-Tb1a (56 aa).

The first 26 residues, Met-1–Ala-26, serve as a signal peptide directing secretion. The propeptide occupies Lys-27–Ala-40. Gly-53 is subject to Glycine amide.

Contains 1 disulfide bond. As to expression, expressed by the venom gland.

It is found in the secreted. Functionally, venom protein with unknown function. Does not induce paralysis when a high dose is administered by intrathoracic injection into the blowfly Lucilia caesar. The sequence is that of U4-myrmicitoxin-Tb1a from Tetramorium bicarinatum (Tramp ant).